Here is a 482-residue protein sequence, read N- to C-terminus: G-protein coupled receptor 37-like 1 (482 aa).

Positions methionine 1 to glycine 25 are cleaved as a signal peptide. 2 disordered regions span residues glycine 25–leucine 56 and proline 78–proline 119. Topologically, residues valine 26–leucine 134 are extracellular. The segment covering glutamine 40–lysine 54 has biased composition (basic and acidic residues). The N-linked (GlcNAc...) asparagine glycan is linked to asparagine 105. The helical transmembrane segment at leucine 135–valine 155 threads the bilayer. At tryptophan 156–serine 167 the chain is on the cytoplasmic side. A helical membrane pass occupies residues valine 168–threonine 188. Topologically, residues phenylalanine 189–alanine 205 are extracellular. An intrachain disulfide couples cysteine 203 to cysteine 286. Residues valine 206 to isoleucine 226 traverse the membrane as a helical segment. The Cytoplasmic segment spans residues aspartate 227–lysine 251. A helical membrane pass occupies residues leucine 252–leucine 272. The Extracellular segment spans residues valine 273–methionine 310. Residues tryptophan 311–valine 331 form a helical membrane-spanning segment. At threonine 332–valine 361 the chain is on the cytoplasmic side. Residues threonine 338 to serine 358 are disordered. A helical membrane pass occupies residues alanine 362–alanine 382. Topologically, residues alanine 383 to glycine 398 are extracellular. A helical membrane pass occupies residues leucine 399–valine 419. At serine 420 to cysteine 482 the chain is on the cytoplasmic side. Threonine 480 carries the phosphothreonine modification.

The protein belongs to the G-protein coupled receptor 1 family. As to quaternary structure, interacts with the PTCH1 receptor. Undergoes metalloprotease-mediated cleavage which reduces its constitutive activity. In terms of processing, ubiquitinated.

Its subcellular location is the cell membrane. It localises to the cell projection. The protein localises to the cilium membrane. In terms of biological role, G-protein coupled receptor. Has been shown to bind the neuroprotective and glioprotective factor prosaposin (PSAP), leading to endocytosis followed by an ERK phosphorylation cascade. However, other studies have shown that prosaposin does not increase activity. It has been suggested that GPR37L1 is a constitutively active receptor which signals through the guanine nucleotide-binding protein G(s) subunit alpha. Participates in the regulation of postnatal cerebellar development by modulating the Shh pathway. Regulates baseline blood pressure in females and protects against cardiovascular stress in males. Mediates inhibition of astrocyte glutamate transporters and reduction in neuronal N-methyl-D-aspartate receptor activity. The polypeptide is G-protein coupled receptor 37-like 1 (GPR37L1) (Bos taurus (Bovine)).